A 359-amino-acid polypeptide reads, in one-letter code: Serpentine receptor class epsilon-33 (359 aa).

A run of 7 helical transmembrane segments spans residues V29 to S49, I65 to I85, Y134 to I156, P168 to F188, L194 to V214, L255 to Y275, and L285 to I305.

This sequence belongs to the nematode receptor-like protein sre family.

The protein resides in the membrane. This is Serpentine receptor class epsilon-33 (sre-33) from Caenorhabditis elegans.